Reading from the N-terminus, the 89-residue chain is Small ribosomal subunit protein uS15 (89 aa).

Belongs to the universal ribosomal protein uS15 family. In terms of assembly, part of the 30S ribosomal subunit. Forms a bridge to the 50S subunit in the 70S ribosome, contacting the 23S rRNA.

One of the primary rRNA binding proteins, it binds directly to 16S rRNA where it helps nucleate assembly of the platform of the 30S subunit by binding and bridging several RNA helices of the 16S rRNA. Functionally, forms an intersubunit bridge (bridge B4) with the 23S rRNA of the 50S subunit in the ribosome. This chain is Small ribosomal subunit protein uS15, found in Rippkaea orientalis (strain PCC 8801 / RF-1) (Cyanothece sp. (strain PCC 8801)).